A 314-amino-acid polypeptide reads, in one-letter code: Cathepsin L 1 (314 aa).

Residues 1–24 (MMLLGASLYLNNTQEVSDEIDTAN) form the signal peptide. The propeptide at 25-109 (LYANWKMKYN…NAANSNFQYK (85 aa)) is activation peptide. Intrachain disulfides connect Cys-132-Cys-175, Cys-166-Cys-207, and Cys-259-Cys-302. Cys-135 is a catalytic residue. Catalysis depends on residues His-265 and Asn-282.

Belongs to the peptidase C1 family.

The protein localises to the secreted. It catalyses the reaction Specificity close to that of papain. As compared to cathepsin B, cathepsin L exhibits higher activity toward protein substrates, but has little activity on Z-Arg-Arg-NHMec, and no peptidyl-dipeptidase activity.. In terms of biological role, may be involved in extracellular digestion. This is Cathepsin L 1 from Paramecium tetraurelia.